We begin with the raw amino-acid sequence, 408 residues long: LL-diaminopimelate aminotransferase (408 aa).

Substrate contacts are provided by Tyr15 and Gly42. Residues Tyr72, 108-109, Tyr132, Asn187, Tyr218, and 246-248 contribute to the pyridoxal 5'-phosphate site; these read SK and SFS. Positions 109, 132, and 187 each coordinate substrate. Lys249 carries the N6-(pyridoxal phosphate)lysine modification. Positions 257 and 292 each coordinate pyridoxal 5'-phosphate. Substrate is bound by residues Asn292 and Arg388.

This sequence belongs to the class-I pyridoxal-phosphate-dependent aminotransferase family. LL-diaminopimelate aminotransferase subfamily. In terms of assembly, homodimer. Pyridoxal 5'-phosphate is required as a cofactor.

It carries out the reaction (2S,6S)-2,6-diaminopimelate + 2-oxoglutarate = (S)-2,3,4,5-tetrahydrodipicolinate + L-glutamate + H2O + H(+). The protein operates within amino-acid biosynthesis; L-lysine biosynthesis via DAP pathway; LL-2,6-diaminopimelate from (S)-tetrahydrodipicolinate (aminotransferase route): step 1/1. Functionally, involved in the synthesis of meso-diaminopimelate (m-DAP or DL-DAP), required for both lysine and peptidoglycan biosynthesis. Catalyzes the direct conversion of tetrahydrodipicolinate to LL-diaminopimelate. In Prochlorococcus marinus (strain MIT 9301), this protein is LL-diaminopimelate aminotransferase.